We begin with the raw amino-acid sequence, 276 residues long: MNVPFWTEEHVRATLPERDAESHKGTYGTALLLAGSDDMPGAALLAGLGAMRSGLGKLVIGTSENVIPLIVPVLPEATYWRDGWKKAADAQLEETYRAIAIGPGLPQTESVQQAVDHVLTADCPVILDAGALAKRTYPKREGPVILTPHPGEFFRMTGVPVNELQKKRAEYAKEWAAQLQTVIVLKGNQTVIAFPDGDCWLNPTGNGALAKGGTGDTLTGMILGMLCCHEDPKHAVLNAVYLHGACAELWTDEHSAHTLLAHELSDILPRVWKRFE.

Residues 7 to 275 form the YjeF C-terminal domain; it reads TEEHVRATLP…DILPRVWKRF (269 aa). 3 residues coordinate (6S)-NADPHX: alanine 42, glycine 104, and histidine 149. Residues 186-190 and glycine 215 each bind AMP; that span reads KGNQT. Aspartate 216 serves as a coordination point for (6S)-NADPHX.

Belongs to the NnrD/CARKD family. In terms of assembly, homotetramer. It depends on Mg(2+) as a cofactor.

The catalysed reaction is (6S)-NADHX + ADP = AMP + phosphate + NADH + H(+). It carries out the reaction (6S)-NADPHX + ADP = AMP + phosphate + NADPH + H(+). Its function is as follows. Catalyzes the dehydration of the S-form of NAD(P)HX at the expense of ADP, which is converted to AMP. Together with NAD(P)HX epimerase, which catalyzes the epimerization of the S- and R-forms, the enzyme allows the repair of both epimers of NAD(P)HX, a damaged form of NAD(P)H that is a result of enzymatic or heat-dependent hydration. This chain is ADP-dependent (S)-NAD(P)H-hydrate dehydratase, found in Bacillus subtilis (strain 168).